A 326-amino-acid chain; its full sequence is tRNA-modifying protein YgfZ (326 aa).

Folate-binding residues include W27 and W189.

It belongs to the tRNA-modifying YgfZ family.

The protein localises to the cytoplasm. Folate-binding protein involved in regulating the level of ATP-DnaA and in the modification of some tRNAs. It is probably a key factor in regulatory networks that act via tRNA modification, such as initiation of chromosomal replication. The protein is tRNA-modifying protein YgfZ of Escherichia coli O7:K1 (strain IAI39 / ExPEC).